Here is a 342-residue protein sequence, read N- to C-terminus: Cyclin pch1 (342 aa).

The segment at 261–342 is disordered; the sequence is LPIDQKNGSH…TDKEMETEAS (82 aa). Residues 278–314 show a composition bias toward polar residues; that stretch reads TPSSLASVSTQATPQHQNSSGRTDSFHSLNTETPSKS. At Thr300 the chain carries Phosphothreonine. Ser302 is modified (phosphoserine). Residues 329–342 show a composition bias toward basic and acidic residues; it reads KSSDTDKEMETEAS.

It belongs to the cyclin family. Cyclin C subfamily. Interacts with cdc2 protein kinase and with the N-terminal domain of cdk9.

The protein resides in the nucleus. Its function is as follows. Essential for progression through the whole cell cycle. In Schizosaccharomyces pombe (strain 972 / ATCC 24843) (Fission yeast), this protein is Cyclin pch1 (pch1).